The primary structure comprises 353 residues: Aromatic amino acid aminotransferase (353 aa).

Lys217 is subject to N6-(pyridoxal phosphate)lysine.

Belongs to the class-II pyridoxal-phosphate-dependent aminotransferase family. In terms of assembly, homodimer. Requires pyridoxal 5'-phosphate as cofactor.

The enzyme catalyses an aromatic L-alpha-amino acid + 2-oxoglutarate = an aromatic oxo-acid + L-glutamate. Functionally, aminotransferase that catalyzes the conversion of aromatic amino acids and 2-oxoglutarate into corresponding aromatic oxo acids and L-glutamate. The protein is Aromatic amino acid aminotransferase of Mycobacterium tuberculosis (strain ATCC 25177 / H37Ra).